The sequence spans 83 residues: Probable insulin-like peptide alpha-type 2 (83 aa).

The first 21 residues, 1–21, serve as a signal peptide directing secretion; the sequence is MHTTTILICFFIFLVQVSTMD. Intrachain disulfides connect cysteine 32–cysteine 66, cysteine 44–cysteine 79, and cysteine 54–cysteine 80.

It belongs to the insulin family.

It localises to the secreted. This is Probable insulin-like peptide alpha-type 2 (ins-22) from Caenorhabditis elegans.